The sequence spans 140 residues: MASLEMNDLKKIGLGLTGFGVFFTFLGVIFVFDKGLIAMGNILFLAGVTLTIGINPAIQFFTKRQNFKGTISFGLGFLLVVFGWPIFGLLLESYGFLVLFSGFWPTLAVFLQRIPLLGWLLQQPYIRSLLDRYRGRRVPV.

Transmembrane regions (helical) follow at residues 12-32 (IGLG…IFVF), 35-55 (GLIA…IGIN), 71-91 (ISFG…GLLL), and 96-116 (FLVL…RIPL).

Belongs to the GOT1 family. In terms of assembly, homodimer. No interactions with STL1, STL2, CESA1, CESA3, CESA4, CESA6, CESA7 or CESA8.

It localises to the golgi apparatus membrane. In terms of biological role, may be involved in fusion of ER-derived transport vesicles with the Golgi complex. In Arabidopsis thaliana (Mouse-ear cress), this protein is Vesicle transport protein GOT1.